A 453-amino-acid polypeptide reads, in one-letter code: Pre-mRNA-splicing factor prp46 (453 aa).

Residues 62 to 71 (EKQAKAAAAG) are compositionally biased toward low complexity. Residues 62–129 (EKQAKAAAAG…PSATRQQRPD (68 aa)) form a disordered region. WD repeat units follow at residues 142-181 (GHLG…LRLT), 184-223 (GHIS…VIRH), 226-265 (GHLS…NIHV), 268-309 (GHKG…GVLT), 311-350 (HKKG…QNFE), 351-389 (GHNA…KFQS), and 400-439 (DAEA…TPES). A disordered region spans residues 432–453 (DDEATPESHPVTWAPTLGRQRY).

The protein belongs to the WD repeat PRL1/PRL2 family. Associated with the spliceosome.

Its subcellular location is the cytoplasm. It localises to the nucleus. Functionally, involved in pre-mRNA splicing and required for cell cycle progression at G2/M. The chain is Pre-mRNA-splicing factor prp46 (prp46) from Aspergillus fumigatus (strain ATCC MYA-4609 / CBS 101355 / FGSC A1100 / Af293) (Neosartorya fumigata).